A 378-amino-acid polypeptide reads, in one-letter code: MDLAGLLKSQFLCHLVFCYVFIASGLIINTVQLFTLLLWPINKQLFRKINCRLSYCISSQLVMLLEWWSGTECTIFTDPRAYPKYGKENAIVVLNHKFEIDFLCGWSLSERFGLLGGSKVLAKKELAYVPIIGWMWYFTEMVFCSRKWEQDRKTVATSLQHLRDYPEKYFFLIHCEGTRFTEKKHEISMQVARAKGLPRLKHHPLPRTKGFAITVRSLRNVVSAVYDCTLNFRNNENPTLLGVLNGKKYHADLYVRRIPLEDIPEDDDRCSAWLHKLYQEKDAFQEEYYRTGTFPETPMVPPRRPWTLVNWLFWASLVLYPFFQFLVSMIRSGSSLTLASFILVFFVASMGVRWMIGVTEIDKGSAYGNSDSKQKQND.

A helical membrane pass occupies residues 11–31 (FLCHLVFCYVFIASGLIINTV). The HXXXXD motif signature appears at 96 to 101 (HKFEID). The next 3 helical transmembrane spans lie at 125–145 (ELAYVPIIGWMWYFTEMVFCS), 307–327 (TLVNWLFWASLVLYPFFQFLV), and 338–358 (LASFILVFFVASMGVRWMIGV).

Belongs to the 1-acyl-sn-glycerol-3-phosphate acyltransferase family.

It localises to the endoplasmic reticulum membrane. It catalyses the reaction a 1-acyl-sn-glycero-3-phosphate + an acyl-CoA = a 1,2-diacyl-sn-glycero-3-phosphate + CoA. It carries out the reaction (4Z,7Z,10Z,13Z,16Z,19Z)-docosahexaenoyl-CoA + 1-hexadecanoyl-sn-glycero-3-phosphate = 1-hexadecanoyl-2-(4Z,7Z,10Z,13Z,16Z,19Z-docosahexaenoyl)-sn-glycero-3-phosphate + CoA. The enzyme catalyses 1-octadecanoyl-sn-glycero-3-phosphate + (9Z,12Z)-octadecadienoyl-CoA = 1-octadecanoyl-2-(9Z,12Z-octadecadienoyl)-sn-glycero-3-phosphate + CoA. The catalysed reaction is 1-octadecanoyl-sn-glycero-3-phosphate + (4Z,7Z,10Z,13Z,16Z,19Z)-docosahexaenoyl-CoA = 1-octadecanoyl-2-(4Z,7Z,10Z,13Z,16Z,19Z-docosahexaenoyl)-sn-glycero-3-phosphate + CoA. It catalyses the reaction (4Z,7Z,10Z,13Z,16Z,19Z)-docosahexaenoyl-CoA + 1-(9Z-octadecenoyl)-sn-glycero-3-phosphate = 1-(9Z-octadecenoyl)-2-(4Z,7Z,10Z,13Z,16Z,19Z-docosahexaenoyl)-sn-glycero-3-phosphate + CoA. Its pathway is phospholipid metabolism; CDP-diacylglycerol biosynthesis; CDP-diacylglycerol from sn-glycerol 3-phosphate: step 2/3. In terms of biological role, converts 1-acyl-sn-glycerol-3-phosphate (lysophosphatidic acid or LPA) into 1,2-diacyl-sn-glycerol-3-phosphate (phosphatidic acid or PA) by incorporating an acyl moiety at the sn-2 position of the glycerol backbone. Exhibits high acyl-CoA specificity for polyunsaturated fatty acyl-CoA, especially docosahexaenoyl-CoA (22:6-CoA, DHA-CoA). This chain is 1-acyl-sn-glycerol-3-phosphate acyltransferase delta (AGPAT4), found in Macaca fascicularis (Crab-eating macaque).